Reading from the N-terminus, the 34-residue chain is Photosystem II reaction center protein M (34 aa).

Residues 5 to 25 (ILAFIATALFILIPTAFSLIL) form a helical membrane-spanning segment.

The protein belongs to the PsbM family. PSII is composed of 1 copy each of membrane proteins PsbA, PsbB, PsbC, PsbD, PsbE, PsbF, PsbH, PsbI, PsbJ, PsbK, PsbL, PsbM, PsbT, PsbX, PsbY, PsbZ, Psb30/Ycf12, at least 3 peripheral proteins of the oxygen-evolving complex and a large number of cofactors. It forms dimeric complexes.

Its subcellular location is the plastid. It is found in the chloroplast thylakoid membrane. Its function is as follows. One of the components of the core complex of photosystem II (PSII). PSII is a light-driven water:plastoquinone oxidoreductase that uses light energy to abstract electrons from H(2)O, generating O(2) and a proton gradient subsequently used for ATP formation. It consists of a core antenna complex that captures photons, and an electron transfer chain that converts photonic excitation into a charge separation. This subunit is found at the monomer-monomer interface. The polypeptide is Photosystem II reaction center protein M (Huperzia lucidula (Shining clubmoss)).